The primary structure comprises 865 residues: Leucine--tRNA ligase (865 aa).

The 'HIGH' region signature appears at Pro58 to His68. The short motif at Lys629–Ser633 is the 'KMSKS' region element. Lys632 provides a ligand contact to ATP.

It belongs to the class-I aminoacyl-tRNA synthetase family.

The protein localises to the cytoplasm. It carries out the reaction tRNA(Leu) + L-leucine + ATP = L-leucyl-tRNA(Leu) + AMP + diphosphate. The chain is Leucine--tRNA ligase from Synechococcus elongatus (strain ATCC 33912 / PCC 7942 / FACHB-805) (Anacystis nidulans R2).